The sequence spans 425 residues: Histone-binding protein RBBP7 (425 aa).

The residue at position 2 (alanine 2) is an N-acetylalanine. Phosphoserine is present on serine 3. An N6-acetyllysine; alternate modification is found at lysine 4. A Glycyl lysine isopeptide (Lys-Gly) (interchain with G-Cter in SUMO2); alternate cross-link involves residue lysine 4. A Glycyl lysine isopeptide (Lys-Gly) (interchain with G-Cter in ubiquitin); alternate cross-link involves residue lysine 4. Threonine 10 bears the Phosphothreonine mark. Phosphoserine occurs at positions 13 and 95. WD repeat units lie at residues 47–122, 128–173, 181–217, 228–269, 275–312, 318–369, and 376–403; these read QWLP…KINH, RARY…LRLR, GLSW…KIVD, VVED…HLVD, VNCL…LHTF, EIFQ…LFIH, and ISDF…IWQM. A Glycyl lysine isopeptide (Lys-Gly) (interchain with G-Cter in SUMO2) cross-link involves residue lysine 101. Position 119 is an N6-acetyllysine (lysine 119). Residue lysine 155 forms a Glycyl lysine isopeptide (Lys-Gly) (interchain with G-Cter in SUMO2) linkage. Residue lysine 159 is modified to N6-acetyllysine; alternate. A Glycyl lysine isopeptide (Lys-Gly) (interchain with G-Cter in SUMO2); alternate cross-link involves residue lysine 159. Serine 354 is modified (phosphoserine).

This sequence belongs to the WD repeat RBAP46/RBAP48/MSI1 family. As to quaternary structure, binds directly to helix 1 of the histone fold of histone H4, a region that is not accessible when H4 is in chromatin. Subunit of the type B histone acetyltransferase (HAT) complex, composed of RBBP7 and HAT1. Subunit of the core histone deacetylase (HDAC) complex, which is composed of HDAC1, HDAC2, RBBP4 and RBBP7. The core HDAC complex associates with SIN3A, ARID4B/SAP180, SAP18, SAP30, SAP130, SUDS3/SAP45 and possibly ARID4A/RBP1 and ING1 to form the SIN3 HDAC complex. Component of the nucleosome remodeling and deacetylase (NuRD) repressor complex, composed of core proteins MTA1, MTA2, MTA3, RBBP4, RBBP7, HDAC1, HDAC2, MBD2, MBD3, and peripherally associated proteins CDK2AP1, CDK2AP2, GATAD2A, GATAD2B, CHD3, CHD4 and CHD5. The exact stoichiometry of the NuRD complex is unknown, and some subunits such as MBD2 and MBD3, GATAD2A and GATAD2B, and CHD3, CHD4 and CHD5 define mutually exclusive NuRD complexes. The NuRD complex may interact with MBD3L1. The NuRD complex may interact with MBD3L2. Subunit of the PRC2/EED-EZH2 complex, which is composed of at least EED, EZH2, RBBP4, RBBP7 and SUZ12. The PRC2/EED-EZH2 complex may also associate with HDAC1. Component of the NURF-1 ISWI chromatin remodeling complex (also called the nucleosome-remodeling factor (NURF) complex) at least composed of SMARCA1 (isoform 2), BPTF, RBBP4 and RBBP7. Within the complex interacts with isoform 2 of SMARCA1. Component of the BPFT-SMARCA1 complex at least composed of SMARCA1 (isoform 1), BPFT, RBBP4 and RBBP7; the complex is catalytically inactive and does not remodel chromatin. Within the complex interacts with isoform 1 of SMARCA1. Interacts with BRCA1. Interacts with CDK2AP1. Interacts with CENPA. Interacts with CHD3. Interacts with CHD4. Interacts with CREBBP, and this interaction may be enhanced by the binding of phosphorylated CREB1 to CREBBP. Interacts with HDAC7. Interacts with MTA1. Interacts with PWWP2B. Interacts with RB1 (via viral protein-binding domain). Interacts with SUV39H1.

Its subcellular location is the nucleus. Functionally, core histone-binding subunit that may target chromatin remodeling factors, histone acetyltransferases and histone deacetylases to their histone substrates in a manner that is regulated by nucleosomal DNA. Component of several complexes which regulate chromatin metabolism. These include the type B histone acetyltransferase (HAT) complex, which is required for chromatin assembly following DNA replication; the core histone deacetylase (HDAC) complex, which promotes histone deacetylation and consequent transcriptional repression; the nucleosome remodeling and histone deacetylase complex (the NuRD complex), which promotes transcriptional repression by histone deacetylation and nucleosome remodeling; and the PRC2/EED-EZH2 complex, which promotes repression of homeotic genes during development; and the NURF (nucleosome remodeling factor) complex. The protein is Histone-binding protein RBBP7 (RBBP7) of Homo sapiens (Human).